Here is a 359-residue protein sequence, read N- to C-terminus: Membrane-bound lytic murein transglycosylase C (359 aa).

The N-terminal stretch at 1 to 16 is a signal peptide; it reads MKKYLALALIAPLLIS. Cysteine 17 carries N-palmitoyl cysteine lipidation. The S-diacylglycerol cysteine moiety is linked to residue cysteine 17.

This sequence belongs to the transglycosylase Slt family.

The protein localises to the cell outer membrane. The catalysed reaction is Exolytic cleavage of the (1-&gt;4)-beta-glycosidic linkage between N-acetylmuramic acid (MurNAc) and N-acetylglucosamine (GlcNAc) residues in peptidoglycan, from either the reducing or the non-reducing ends of the peptidoglycan chains, with concomitant formation of a 1,6-anhydrobond in the MurNAc residue.. Functionally, murein-degrading enzyme. May play a role in recycling of muropeptides during cell elongation and/or cell division. This chain is Membrane-bound lytic murein transglycosylase C, found in Shigella sonnei (strain Ss046).